A 456-amino-acid chain; its full sequence is UDP-N-acetylmuramoylalanine--D-glutamate ligase (456 aa).

119 to 125 (GSNGKTT) is a binding site for ATP.

The protein belongs to the MurCDEF family.

It localises to the cytoplasm. The enzyme catalyses UDP-N-acetyl-alpha-D-muramoyl-L-alanine + D-glutamate + ATP = UDP-N-acetyl-alpha-D-muramoyl-L-alanyl-D-glutamate + ADP + phosphate + H(+). It functions in the pathway cell wall biogenesis; peptidoglycan biosynthesis. Its function is as follows. Cell wall formation. Catalyzes the addition of glutamate to the nucleotide precursor UDP-N-acetylmuramoyl-L-alanine (UMA). The chain is UDP-N-acetylmuramoylalanine--D-glutamate ligase from Limosilactobacillus reuteri (strain DSM 20016) (Lactobacillus reuteri).